Here is a 193-residue protein sequence, read N- to C-terminus: CD70 antigen (193 aa).

Over 1–17 the chain is Cytoplasmic; the sequence is MPEEGSGCSVRRRPYGC. The chain crosses the membrane as a helical; Signal-anchor for type II membrane protein span at residues 18 to 38; sequence VLRAALVPLVAGLVICLVVCI. The Extracellular segment spans residues 39–193; sequence QRFAQAQQQL…TFFGVQWVRP (155 aa). The THD domain maps to 56–191; the sequence is DVAELQLNHT…DETFFGVQWV (136 aa). An N-linked (GlcNAc...) asparagine glycan is attached at Asn-63. 2 disulfides stabilise this stretch: Cys-115–Cys-151 and Cys-133–Cys-168. A glycan (N-linked (GlcNAc...) asparagine) is linked at Asn-170.

It belongs to the tumor necrosis factor family. Homotrimer. Post-translationally, N-glycosylated.

The protein localises to the cell membrane. Functionally, expressed at the plasma membrane of B cells, it is the ligand of the CD27 receptor which is specifically expressed at the surface of T cells. The CD70-CD27 signaling pathway mediates antigen-specific T cell activation and expansion which in turn provides immune surveillance of B cells. The polypeptide is CD70 antigen (Homo sapiens (Human)).